Reading from the N-terminus, the 144-residue chain is Small ribosomal subunit protein uS19 (144 aa).

Belongs to the universal ribosomal protein uS19 family.

Functionally, protein S19 forms a complex with S13 that binds strongly to the 16S ribosomal RNA. This chain is Small ribosomal subunit protein uS19 (rps19), found in Aeropyrum pernix (strain ATCC 700893 / DSM 11879 / JCM 9820 / NBRC 100138 / K1).